The sequence spans 815 residues: Protein SEY1 homolog (815 aa).

The Cytoplasmic portion of the chain corresponds to 1 to 737 (MRQIIDYDCN…IQSTGRQPQN (737 aa)). One can recognise a GB1/RHD3-type G domain in the interval 28–260 (TLGFNVISIL…LPKDYTRRIP (233 aa)). 38–45 (GCQSTGKS) is a GTP binding site. Residues 298–321 (AKDDILDGYKKSIKDLQKKMEKRE) adopt a coiled-coil conformation. Residues 738–758 (IPWWIYLLIIILGFDEITYVL) form a helical membrane-spanning segment. Topologically, residues 759-761 (TSP) are lumenal. Residues 762–782 (VLVTLLLLLASFIYSYLTGNF) form a helical membrane-spanning segment. Over 783–815 (SSFCNYSQQFVIISTKILHYISGAIHSSLDNRK) the chain is Cytoplasmic.

Belongs to the TRAFAC class dynamin-like GTPase superfamily. GB1/RHD3 GTPase family. RHD3 subfamily.

The protein localises to the endoplasmic reticulum membrane. Its function is as follows. Probable GTP-binding protein that may be involved in cell development. This Cryptosporidium hominis protein is Protein SEY1 homolog.